We begin with the raw amino-acid sequence, 254 residues long: Receptor expression-enhancing protein 2 (254 aa).

2 helical membrane passes run 1-21 (MVSW…YPAY) and 35-55 (YVKW…ETLT). S152 is subject to Phosphoserine. Residues 194-254 (LSLRSSTSQP…KKSSGGGDSA (61 aa)) form a disordered region. Basic and acidic residues predominate over residues 205–219 (PRTETSEDDLGDKAP).

Belongs to the DP1 family. Interacts with odorant receptor proteins.

The protein localises to the membrane. In terms of biological role, required for endoplasmic reticulum (ER) network formation, shaping and remodeling. May enhance the cell surface expression of odorant receptors. The sequence is that of Receptor expression-enhancing protein 2 (Reep2) from Mus musculus (Mouse).